Consider the following 123-residue polypeptide: Large ribosomal subunit protein bL12 (123 aa).

The protein belongs to the bacterial ribosomal protein bL12 family. As to quaternary structure, homodimer. Part of the ribosomal stalk of the 50S ribosomal subunit. Forms a multimeric L10(L12)X complex, where L10 forms an elongated spine to which 2 to 4 L12 dimers bind in a sequential fashion. Binds GTP-bound translation factors.

Functionally, forms part of the ribosomal stalk which helps the ribosome interact with GTP-bound translation factors. Is thus essential for accurate translation. This Haemophilus influenzae (strain 86-028NP) protein is Large ribosomal subunit protein bL12.